Reading from the N-terminus, the 1958-residue chain is Sodium channel protein type 10 subunit alpha (1958 aa).

Residues 1-125 (MEFPFGSVGT…FNLIRRTAIK (125 aa)) lie on the Cytoplasmic side of the membrane. Positions 27–54 (QIAAHRAAKKGRPKQRGQKDKSEKPRPQ) are disordered. Basic residues predominate over residues 32–42 (RAAKKGRPKQR). The span at 43 to 54 (GQKDKSEKPRPQ) shows a compositional bias: basic and acidic residues. The I repeat unit spans residues 116 to 404 (FNLIRRTAIK…VTMAYEEQSQ (289 aa)). The helical transmembrane segment at 126–149 (VSVHSWFSIFITVTILVNCVCMTR) threads the bilayer. The Extracellular segment spans residues 150-154 (TDLPE). A helical membrane pass occupies residues 155–174 (KLEYAFTVVYTFEALIKILA). Over 175-187 (RGFCLNEFTYLRD) the chain is Cytoplasmic. A helical transmembrane segment spans residues 188–206 (PWNWLDFSVITLAYVGAAI). At 207–212 (DLRGIS) the chain is on the extracellular side. The chain crosses the membrane as a helical; Voltage-sensor span at residues 213-232 (GLRTFRVLRALKTVSVIPGL). Topologically, residues 233 to 248 (KVIVGALIHSVRKLAD) are cytoplasmic. The helical transmembrane segment at 249-272 (VTILTVFCLSVFALVGLQLFKGNL) threads the bilayer. The Extracellular portion of the chain corresponds to 273 to 340 (KNKCIKNGTD…PDFNYTSFDS (68 aa)). Residues Cys-276 and Cys-318 are joined by a disulfide bond. 4 N-linked (GlcNAc...) asparagine glycosylation sites follow: Asn-279, Asn-288, Asn-311, and Asn-334. An intramembrane region (pore-forming) is located at residues 341 to 365 (FAWAFLSLFRLMTQDSWERLYQQTL). Over 366-372 (RASGKMY) the chain is Extracellular. A helical membrane pass occupies residues 373 to 398 (MVFFVLVIFLGSFYLVNLILAVVTMA). Residues 399–658 (YEEQSQATIA…KWKKFKMVLF (260 aa)) are Cytoplasmic-facing. Ser-440, Ser-443, Ser-466, and Ser-478 each carry phosphoserine. 2 disordered regions span residues 444–483 (HNGS…PYNQ) and 539–583 (GRGA…APEG). Residues 549 to 560 (PRSPLPQSPNPG) are compositionally biased toward pro residues. Phosphoserine is present on residues Ser-611 and Ser-614. The II repeat unit spans residues 646–910 (CCPKWKKFKM…EDDGEVNNLQ (265 aa)). The chain crosses the membrane as a helical span at residues 659-683 (ELVTDPFAELTITLCIVVNTVFMAM). Residues 684–694 (EHYPMTDAFDA) are Extracellular-facing. A helical transmembrane segment spans residues 695–718 (MLQAGNIVFTVFFTMEMAFKIIAF). The Cytoplasmic portion of the chain corresponds to 719–726 (DPYYYFQK). A helical transmembrane segment spans residues 727–746 (KWNIFDCVIVTVSLLELSTS). The Extracellular portion of the chain corresponds to 747-752 (KKGSLS). The chain crosses the membrane as a helical; Voltage-sensor span at residues 753 to 772 (VLRTFRLLRVFKLAKSWPTL). At 773-788 (NMLIKIIGNSVGALGN) the chain is on the cytoplasmic side. Residues 789–809 (LTFILAIIVFIFALVGKQLLS) form a helical membrane-spanning segment. Over 810 to 833 (ENYGCRRDGISVWNGERLRWHMCD) the chain is Extracellular. Residues 834-854 (FFHSFLVVFRILCGEWIENMW) constitute an intramembrane region (pore-forming). The Extracellular segment spans residues 855–863 (VCMEVSQDY). A disulfide bridge connects residues Cys-856 and Cys-865. The helical transmembrane segment at 864–889 (ICLTLFLTVMVLGNLVVLNLFIALLL) threads the bilayer. Topologically, residues 890-1148 (NSFSADNLTA…GWQVRKTCYR (259 aa)) are cytoplasmic. Residues 1006-1094 (DLDELEEDVE…SEGSTVDCPD (89 aa)) are disordered. Over residues 1017 to 1038 (ASQSSWQEESPKGQQELLQQVQ) the composition is skewed to polar residues. An III repeat occupies 1141-1450 (QVRKTCYRIV…KKYYNAMKKL (310 aa)). The helical transmembrane segment at 1149-1172 (IVEHSWFESFIIFMILLSSGALAF) threads the bilayer. Over 1173–1185 (EDNYLEEKPRVKS) the chain is Extracellular. The chain crosses the membrane as a helical span at residues 1186-1211 (VLEYTDRVFTFIFVFEMLLKWVAYGF). At 1212-1217 (KKYFTN) the chain is on the cytoplasmic side. Residues 1218 to 1239 (AWCWLDFLIVNISLTSLIAKIL) traverse the membrane as a helical segment. The Extracellular segment spans residues 1240 to 1243 (EYSD). Residues 1244–1265 (VASIKALRTLRALRPLRALSRF) form a helical; Voltage-sensor membrane-spanning segment. Over 1266-1284 (EGMRVVVDALVGAIPSIMN) the chain is Cytoplasmic. A helical transmembrane segment spans residues 1285–1312 (VLLVCLIFWLIFSIMGVNLFAGKFSRCV). The Extracellular portion of the chain corresponds to 1313 to 1354 (DTRSNPFSVVNSTFVTNKSDCYNQNNTGHFFWVNVKVNFDNV). 3 N-linked (GlcNAc...) asparagine glycosylation sites follow: Asn-1323, Asn-1329, and Asn-1337. Residues 1355–1376 (AMGYLALLQVATFKGWMDIMYA) constitute an intramembrane region (pore-forming). Residues 1377–1392 (AVDSRDINSQPNWEES) are Extracellular-facing. Residues 1393 to 1419 (LYMYLYFVVFIIFGGFFTLNLFVGVII) traverse the membrane as a helical segment. At 1420–1472 (DNFNQQKKKLGGQDIFMTEEQKKYYNAMKKLGSKKPQKPIPRPLNKYQGFVFD) the chain is on the cytoplasmic side. At Ser-1452 the chain carries Phosphoserine; by PKC. One copy of the IV repeat lies at 1459–1758 (IPRPLNKYQG…WEKFDPEATQ (300 aa)). Residues 1473 to 1496 (IVTRQAFDIIIMALICLNMITMMV) form a helical membrane-spanning segment. The Extracellular portion of the chain corresponds to 1497 to 1507 (ETDNQSEEKTK). Residue Asn-1500 is glycosylated (N-linked (GlcNAc...) asparagine). A helical membrane pass occupies residues 1508 to 1531 (VLGRINQFFVAVFTGECVMKMFAL). The Cytoplasmic portion of the chain corresponds to 1532 to 1537 (RQYYFT). Residues 1538-1561 (NGWNVFDFIVVILSISSLLFSAIL) traverse the membrane as a helical segment. Over 1562–1573 (SSLESYFSPTLL) the chain is Extracellular. The chain crosses the membrane as a helical; Voltage-sensor span at residues 1574–1595 (RVIRLARIGRILRLIRAAKGIR). The Cytoplasmic segment spans residues 1596 to 1610 (TLLFALMMSLPALFN). Residues 1611-1633 (IGLLLFLVMFIYSIFGMASFANV) traverse the membrane as a helical segment. Residues 1634-1647 (IDEAGIDDMFNFKT) are Extracellular-facing. Positions 1648–1670 (FGNSMLCLFQITTSAGWDGLLSP) form an intramembrane region, pore-forming. Residues 1671 to 1698 (ILNTGPPYCDPNRPNSNGSKGNCGSPAV) are Extracellular-facing. Residue Asn-1687 is glycosylated (N-linked (GlcNAc...) asparagine). Residues 1699 to 1723 (GILFFTTYIIISFLIVVNMYIAVIL) form a helical membrane-spanning segment. Over 1724–1958 (ENFNVATEES…AKEGKSPGPQ (235 aa)) the chain is Cytoplasmic. The region spanning 1852–1881 (EDISATIIQKAYRNYMLQRSLMLSNPLHVP) is the IQ domain. Residues 1901 to 1958 (NDNGGLPDKSETASATSFPPSYDSVTRGLSDRANISTSSSMQNEDEVTAKEGKSPGPQ) are disordered. Polar residues predominate over residues 1933-1942 (ANISTSSSMQ). Over residues 1947–1958 (VTAKEGKSPGPQ) the composition is skewed to basic and acidic residues.

The protein belongs to the sodium channel (TC 1.A.1.10) family. Nav1.8/SCN10A subfamily. As to quaternary structure, the channel consists of an ion conducting pore forming alpha-subunit regulated by one or more associated auxiliary subunits SCN1B, SCN2B and SCN3B; electrophysiological properties may vary depending on the type of the associated beta subunits. Found in a number of complexes with PRX, DYNLT1 and PDZD2. Interacts with proteins such as FSTL1, PRX, DYNLT1, PDZD2, S100A10 and many others. Interacts with NEDD4 and NEDD4L. Ubiquitinated by NEDD4L; which promotes its endocytosis. In terms of processing, phosphorylation at Ser-1452 by PKC in a highly conserved cytoplasmic loop slows inactivation of the sodium channel and reduces peak sodium currents. Post-translationally, lacks the cysteine which covalently binds the conotoxin GVIIJ. This cysteine (position 815) is speculated in other sodium channel subunits alpha to be implied in covalent binding with the sodium channel subunit beta-2 or beta-4. Expressed in dorsal root ganglion and trigeminal ganglion.

The protein resides in the cell membrane. It carries out the reaction Na(+)(in) = Na(+)(out). Functionally, tetrodotoxin-resistant channel that mediates the voltage-dependent sodium ion permeability of excitable membranes. Assuming opened or closed conformations in response to the voltage difference across the membrane, the protein forms a sodium-selective channel through which sodium ions may pass in accordance with their electrochemical gradient. Plays a role in neuropathic pain mechanisms. This Mus musculus (Mouse) protein is Sodium channel protein type 10 subunit alpha.